Consider the following 1070-residue polypeptide: MLGGGNERMSTIPAFNQIQFEGFCRFIDHGLTEELSKFPKIEDTDQEIEFQLFVETYKLVEPLIKERDAVYESLTYSSELYVSAGLIWKTRRDMQEQTIFIGNIPLMNSLGTSIVNGLYRIVISQILQSPGIYYRSELDHNGISVYTGTIISDWGGRLELEIDRKARIWARVSRKQKISILVLSSAMGSNLREILENVCYPEIFLSFLNDKEKKKIGSKENAILEFYQQFSCVGGDPVFSESLCKELQKKFFQQRCELGRIGRRNLNQRLNLDIPENNTFLLQRDILAAADHLIGLKFGMGTLDDMNHLKNKRIRSVADLLQDQFGLALVRLENMVRGTICGAIRHKLIPTPQNLVTSTPLTTTFESFFGLHPLSQVLDRTNPLTQIVHGRKLSYLGPGGLTGRTASFRIRDIHPSHYGRICPIDTSEGINVGLIGSLAIHARIGHWGSLETPFYEISERSKKVRMLYLSPSRDEYYMVATGNSLALNPGIQEEQIVPARYRQEFLTIEWEQVHLRSIFPFQYFSIGASLIPFIEHNDANRALMSSNMQRQAVPLSRSEKCIVGTGLERQVARDSGVAAIAEHGGKIIYTDTDKIIFSGNGYTRRIPLVMYQRSNKNTCMQQKSQVHQGKCIKKGQILADGAATVGGELALGKNVLVAYMPWEGYNFEDAVLISERLIYEDIYTSFHIRKYEIQTHVTSHGPERITNEIPHLEARLLCNLDKNGIVMLGSWVETGDILVGKLTPQMAKESSYAPEDRLLRAILGIQVSTSKETCLKLPIGGRGRVIDVRWIQKKGGSSYNPEIIRVYISQKREIKVGDKVAGRHGNKGIVSKILPREDMPYLQNGRPVDMVFNPLGVPSRMNVGQIFECSLGLAGSLLDRHYRIVPFDERYEQEASRKLVFSELYEASKQTASPWVFEPEYPGKSRIFDGRTGNPFEQPVIIGKPYILKLIHQVDDKIHGRSSGHYALVTQQPLRGRAKQGGQRVGEMEVWALEGFGVAHILQEMLTYKSDHIRARQEVLGTTIIGGTIPKPEDTPESFRLLVRELRSLALELNHFLVSEKNFQINRKEA.

Belongs to the RNA polymerase beta chain family. In terms of assembly, in plastids the minimal PEP RNA polymerase catalytic core is composed of four subunits: alpha, beta, beta', and beta''. When a (nuclear-encoded) sigma factor is associated with the core the holoenzyme is formed, which can initiate transcription.

The protein localises to the plastid. The protein resides in the chloroplast. It carries out the reaction RNA(n) + a ribonucleoside 5'-triphosphate = RNA(n+1) + diphosphate. Its function is as follows. DNA-dependent RNA polymerase catalyzes the transcription of DNA into RNA using the four ribonucleoside triphosphates as substrates. The sequence is that of DNA-directed RNA polymerase subunit beta from Cucumis sativus (Cucumber).